The chain runs to 93 residues: Pyrimidine/purine nucleoside phosphorylase (93 aa).

The protein belongs to the nucleoside phosphorylase PpnP family.

The enzyme catalyses a purine D-ribonucleoside + phosphate = a purine nucleobase + alpha-D-ribose 1-phosphate. The catalysed reaction is adenosine + phosphate = alpha-D-ribose 1-phosphate + adenine. It catalyses the reaction cytidine + phosphate = cytosine + alpha-D-ribose 1-phosphate. It carries out the reaction guanosine + phosphate = alpha-D-ribose 1-phosphate + guanine. The enzyme catalyses inosine + phosphate = alpha-D-ribose 1-phosphate + hypoxanthine. The catalysed reaction is thymidine + phosphate = 2-deoxy-alpha-D-ribose 1-phosphate + thymine. It catalyses the reaction uridine + phosphate = alpha-D-ribose 1-phosphate + uracil. It carries out the reaction xanthosine + phosphate = alpha-D-ribose 1-phosphate + xanthine. Catalyzes the phosphorolysis of diverse nucleosides, yielding D-ribose 1-phosphate and the respective free bases. Can use uridine, adenosine, guanosine, cytidine, thymidine, inosine and xanthosine as substrates. Also catalyzes the reverse reactions. This chain is Pyrimidine/purine nucleoside phosphorylase, found in Vibrio vulnificus (strain CMCP6).